A 715-amino-acid polypeptide reads, in one-letter code: ABC transporter F family member 3 (715 aa).

Thr2 is modified (N-acetylthreonine). A disordered region spans residues 96 to 118 (VRMNDGMDDGPVKKKKPEPVDGP). ABC transporter domains are found at residues 175–436 (IHMD…KNQQ) and 504–713 (ISFS…LLQS). ATP contacts are provided by residues 207–214 (GRNGTGKT) and 537–544 (GPNGIGKS).

Belongs to the ABC transporter superfamily. ABCF family. EF3 (TC 3.A.1.121) subfamily.

This Arabidopsis thaliana (Mouse-ear cress) protein is ABC transporter F family member 3 (ABCF3).